The chain runs to 141 residues: Large ribosomal subunit protein uL13 (141 aa).

This sequence belongs to the universal ribosomal protein uL13 family. As to quaternary structure, part of the 50S ribosomal subunit.

In terms of biological role, this protein is one of the early assembly proteins of the 50S ribosomal subunit, although it is not seen to bind rRNA by itself. It is important during the early stages of 50S assembly. The protein is Large ribosomal subunit protein uL13 of Helicobacter pylori (strain Shi470).